The sequence spans 450 residues: uncharacterized protein (450 aa).

Helical transmembrane passes span I10–A30, L53–I73, T95–I115, L120–N140, A148–F168, L199–T219, I242–A262, T267–F287, L302–A322, I343–F363, L378–G398, and V428–M448.

The protein resides in the cell membrane. This is an uncharacterized protein from Haemophilus influenzae (strain ATCC 51907 / DSM 11121 / KW20 / Rd).